The sequence spans 413 residues: Protein trichome birefringence-like 31 (413 aa).

A helical; Signal-anchor for type II membrane protein membrane pass occupies residues Ile-12–Asp-34. Positions Gly-141–Ser-143 match the GDS motif motif. The DCXHWCLPGXXDXWN motif motif lies at Asp-384–Asn-398.

This sequence belongs to the PC-esterase family. TBL subfamily.

It is found in the membrane. Functionally, may act as a bridging protein that binds pectin and other cell wall polysaccharides. Probably involved in maintaining esterification of pectins. May be involved in the specific O-acetylation of cell wall polymers. The sequence is that of Protein trichome birefringence-like 31 (TBL31) from Arabidopsis thaliana (Mouse-ear cress).